We begin with the raw amino-acid sequence, 174 residues long: Crossover junction endodeoxyribonuclease RuvC (174 aa).

Residues D8, E67, and D139 contribute to the active site. D8, E67, and D139 together coordinate Mg(2+).

The protein belongs to the RuvC family. Homodimer which binds Holliday junction (HJ) DNA. The HJ becomes 2-fold symmetrical on binding to RuvC with unstacked arms; it has a different conformation from HJ DNA in complex with RuvA. In the full resolvosome a probable DNA-RuvA(4)-RuvB(12)-RuvC(2) complex forms which resolves the HJ. The cofactor is Mg(2+).

Its subcellular location is the cytoplasm. It catalyses the reaction Endonucleolytic cleavage at a junction such as a reciprocal single-stranded crossover between two homologous DNA duplexes (Holliday junction).. Functionally, the RuvA-RuvB-RuvC complex processes Holliday junction (HJ) DNA during genetic recombination and DNA repair. Endonuclease that resolves HJ intermediates. Cleaves cruciform DNA by making single-stranded nicks across the HJ at symmetrical positions within the homologous arms, yielding a 5'-phosphate and a 3'-hydroxyl group; requires a central core of homology in the junction. The consensus cleavage sequence is 5'-(A/T)TT(C/G)-3'. Cleavage occurs on the 3'-side of the TT dinucleotide at the point of strand exchange. HJ branch migration catalyzed by RuvA-RuvB allows RuvC to scan DNA until it finds its consensus sequence, where it cleaves and resolves the cruciform DNA. The polypeptide is Crossover junction endodeoxyribonuclease RuvC (Pseudomonas putida (strain ATCC 47054 / DSM 6125 / CFBP 8728 / NCIMB 11950 / KT2440)).